Reading from the N-terminus, the 201-residue chain is Peptide deformylase (201 aa).

Residues Cys121 and His163 each coordinate Fe cation. Glu164 is a catalytic residue. Residue His167 coordinates Fe cation.

The protein belongs to the polypeptide deformylase family. Requires Fe(2+) as cofactor.

The enzyme catalyses N-terminal N-formyl-L-methionyl-[peptide] + H2O = N-terminal L-methionyl-[peptide] + formate. Removes the formyl group from the N-terminal Met of newly synthesized proteins. Requires at least a dipeptide for an efficient rate of reaction. N-terminal L-methionine is a prerequisite for activity but the enzyme has broad specificity at other positions. The polypeptide is Peptide deformylase (Parasynechococcus marenigrum (strain WH8102)).